A 206-amino-acid polypeptide reads, in one-letter code: MRYTVALTGGIGSGKSTVADAFADLGITVIDADIIARQMVEPGQPALNAIAEHFGSELIAADGTLRRRALRERIFSHPEEKAWLNALLHPLIQQETQQQFQQATSPYVLWVVPLLVENRLYQKANRVLVVDVMPETQLIRTMQRDDVTREHVEHILAAQATREARLAVADDVIDNNGAPDAIASDVARLHASYLKLASQFVSQEKP.

The 197-residue stretch at 4–200 (TVALTGGIGS…ASYLKLASQF (197 aa)) folds into the DPCK domain. 12–17 (GSGKST) lines the ATP pocket.

The protein belongs to the CoaE family.

The protein resides in the cytoplasm. It carries out the reaction 3'-dephospho-CoA + ATP = ADP + CoA + H(+). It participates in cofactor biosynthesis; coenzyme A biosynthesis; CoA from (R)-pantothenate: step 5/5. Catalyzes the phosphorylation of the 3'-hydroxyl group of dephosphocoenzyme A to form coenzyme A. This is Dephospho-CoA kinase from Salmonella paratyphi A (strain ATCC 9150 / SARB42).